Reading from the N-terminus, the 808-residue chain is MAQILLHGTLHVTIYEVDNLQKEGGGHFFSKIKEHVEETIGFGKGTPAIYATVDLEKARVGRTRKIKNEPNNPRWYESFHIYCAHMASNVIFTVKDDNPIGATLIGRAYVPVEELLEGEEIDKWVEILDREMNPIAEGSKIHVKLQFFDVSRDPNWERGIRSSKYPGVPYTFFAQRTGCRVSLYQDAHVPDNFIPKIPLSGGKYYEPHRCWEDIFDAIINAKHLIYITGWSVYTEITLVRDSRRQKPGGDITLGELLKKKASEGVKVLMLVWDDRTSVGLLKKDGLMATHDQETEQFFQGTEVNCVLCPRNPDDGGSIVQSLQIGTMFTHHQKIVVVDSELPSGESEKRRILSFVGGIDLCDGRYDTPFHSLFRTLDTAHHDDFHQPNFPDGAITKGGPREPWHDIHSRLEGPIAWDVLFNFEQRWRKQGGKDVLVNFRELDDIIIPPSPVMHLDDSETWNVQLFRSIDEGAAFGFPETPEDAAKAGLVSGXDNIIDRSIQDAYIHAIRRAKNFIYIENQYFLGSSYDWQSDDIKVEDIGALHVIPKELALKIVSKIEAGERFTVYVVVPMWPEGIPESASVQAILDWQRRTMEMMYKHIVQALNAKGIEEDPRNYLTFFCIGNREVKKSGAYEPSETPEPDSDYIRAQEARRFMIYVHSKMMIVDDEYIIVGSANINQRSMDGARDSEIAMGAYQPHHLATREPARGQIHGFRMALWYEHLGMLDETFLHPESEECVSKVNRMADKYWDLYSSESLERDLPGHLLRYPIGVASEGDVTELPGAEHFPDTKARVLGTKSDYLPPILTT.

The 125-residue stretch at 1 to 125 (MAQILLHGTL…LEGEEIDKWV (125 aa)) folds into the C2 domain. Asp-186 provides a ligand contact to Ca(2+). The PLD phosphodiesterase 1 domain occupies 326-364 (TMFTHHQKIVVVDSELPSGESEKRRILSFVGGIDLCDGR). Catalysis depends on residues His-331, Lys-333, and Asp-338. His-331 contacts a 1,2-diacyl-sn-glycero-3-phosphate. Ca(2+) contacts are provided by His-370 and His-404. A 1,2-diacyl-sn-glycero-3-phosphate-binding residues include Gln-520 and His-659. The PLD phosphodiesterase 2 domain occupies 654 to 681 (FMIYVHSKMMIVDDEYIIVGSANINQRS). Catalysis depends on residues His-659, Lys-661, and Asp-666. Ca(2+) is bound at residue Glu-720.

The protein belongs to the phospholipase D family. C2-PLD subfamily. Requires Ca(2+) as cofactor.

The catalysed reaction is a 1,2-diacyl-sn-glycero-3-phosphocholine + H2O = a 1,2-diacyl-sn-glycero-3-phosphate + choline + H(+). Functionally, hydrolyzes glycerol-phospholipids at the terminal phosphodiesteric bond. Plays an important role in various cellular processes. In Nicotiana tabacum (Common tobacco), this protein is Phospholipase D alpha 1 (PLD1).